Consider the following 537-residue polypeptide: Protein pns1 (537 aa).

A compositionally biased stretch (polar residues) spans 1-16 (MSGQAASYYNPSQSYG). The interval 1 to 35 (MSGQAASYYNPSQSYGDFQPGMQNPQQQPDYYNNN) is disordered. Topologically, residues 1 to 81 (MSGQAASYYN…FKIERPKYHD (81 aa)) are cytoplasmic. Low complexity predominate over residues 23–35 (QNPQQQPDYYNNN). A helical membrane pass occupies residues 82–102 (IWAGLLFIAVFLGYVAVSGVA). The Extracellular portion of the chain corresponds to 103–130 (IHRYAKYKGLNGDGIYDSSNSFSLDTNT). Residues 131 to 151 (LILFIFVLCVALAFSYAYFLG) form a helical membrane-spanning segment. The Cytoplasmic portion of the chain corresponds to 152–158 (ARYFSKL). A helical membrane pass occupies residues 159–179 (FIWVTGILNIVFALATGIYYI). Residues 180 to 184 (ARKQY) lie on the Extracellular side of the membrane. A helical membrane pass occupies residues 185 to 205 (GGGIVFLLFGVFAIICFISWI). The Cytoplasmic segment spans residues 206–227 (PRIPFSAFMLQTSIDVSRKYGH). Residues 228-248 (MFIVSTIGGLVAVAFAAWFSV) traverse the membrane as a helical segment. Residues 249-275 (TLVSIYVAYEPSSSGSNPSCSDGGCSR) lie on the Extracellular side of the membrane. A helical membrane pass occupies residues 276-296 (ARVIGLVVYVTFAMYWFSEWL). Residues 297 to 333 (KNTIHTTIAGVYGSWYFWSQSPNGMPRGSTRGAFRRA) are Cytoplasmic-facing. A helical membrane pass occupies residues 334–354 (TTYSFGSVSFGSLIIAIINML). The Extracellular segment spans residues 355–370 (RQACSVAQRNEAAEGS). Residues 371–391 (IVGSIMFWILGCFIAILDWLV) traverse the membrane as a helical segment. Over 392 to 432 (TLFNRYAFCHIALYGKAYIPAAKDTWTMMRDRGIDALVNDC) the chain is Cytoplasmic. A helical membrane pass occupies residues 433–453 (LIGPVLTMGSVFVSYVCALLA). Residues 454-469 (YLYLQFTKPSYNADGN) are Extracellular-facing. A glycan (N-linked (GlcNAc...) asparagine) is linked at N469. Residues 470-490 (FTAVIMAFAFVIGLQICQIFM) traverse the membrane as a helical segment. The Cytoplasmic portion of the chain corresponds to 491–537 (TPVSSGIETIFVAMGWDPQVMIRDHPDLYYRMIQVYPRVQQAIQPSA).

This sequence belongs to the CTL (choline transporter-like) family.

Its subcellular location is the cell membrane. Functionally, probably involved in transport through the plasma membrane. The polypeptide is Protein pns1 (pns1) (Aspergillus fumigatus (strain ATCC MYA-4609 / CBS 101355 / FGSC A1100 / Af293) (Neosartorya fumigata)).